The following is a 386-amino-acid chain: Succinyl-diaminopimelate desuccinylase (386 aa).

Position 77 (His77) interacts with Zn(2+). Residue Asp79 is part of the active site. Zn(2+) is bound at residue Asp110. Glu144 serves as the catalytic Proton acceptor. Residues Glu145, Glu173, and His359 each coordinate Zn(2+).

Belongs to the peptidase M20A family. DapE subfamily. In terms of assembly, homodimer. Requires Zn(2+) as cofactor. Co(2+) serves as cofactor.

The catalysed reaction is N-succinyl-(2S,6S)-2,6-diaminopimelate + H2O = (2S,6S)-2,6-diaminopimelate + succinate. The protein operates within amino-acid biosynthesis; L-lysine biosynthesis via DAP pathway; LL-2,6-diaminopimelate from (S)-tetrahydrodipicolinate (succinylase route): step 3/3. Catalyzes the hydrolysis of N-succinyl-L,L-diaminopimelic acid (SDAP), forming succinate and LL-2,6-diaminopimelate (DAP), an intermediate involved in the bacterial biosynthesis of lysine and meso-diaminopimelic acid, an essential component of bacterial cell walls. In Ralstonia pickettii (strain 12J), this protein is Succinyl-diaminopimelate desuccinylase.